The primary structure comprises 109 residues: ATP synthase subunit c (109 aa).

2 consecutive transmembrane segments (helical) span residues 42 to 62 (YIGT…QGFS) and 88 to 108 (LALA…IIFV).

The protein belongs to the ATPase C chain family. In terms of assembly, F-type ATPases have 2 components, F(1) - the catalytic core - and F(0) - the membrane proton channel. F(1) has five subunits: alpha(3), beta(3), gamma(1), delta(1), epsilon(1). F(0) has three main subunits: a(1), b(2) and c(10-14). The alpha and beta chains form an alternating ring which encloses part of the gamma chain. F(1) is attached to F(0) by a central stalk formed by the gamma and epsilon chains, while a peripheral stalk is formed by the delta and b chains.

It localises to the cell membrane. In terms of biological role, f(1)F(0) ATP synthase produces ATP from ADP in the presence of a proton or sodium gradient. F-type ATPases consist of two structural domains, F(1) containing the extramembraneous catalytic core and F(0) containing the membrane proton channel, linked together by a central stalk and a peripheral stalk. During catalysis, ATP synthesis in the catalytic domain of F(1) is coupled via a rotary mechanism of the central stalk subunits to proton translocation. Functionally, key component of the F(0) channel; it plays a direct role in translocation across the membrane. A homomeric c-ring of between 10-14 subunits forms the central stalk rotor element with the F(1) delta and epsilon subunits. In Ureaplasma urealyticum serovar 10 (strain ATCC 33699 / Western), this protein is ATP synthase subunit c.